Consider the following 413-residue polypeptide: Eukaryotic initiation factor 4A-10 (413 aa).

A Q motif motif is present at residues 40 to 68 (DSFDAMGLQENLLRGIYAYGFEKPSAIQQ). Residues 71–241 (IVPFCKGLDV…RKFMNKPVRI (171 aa)) form the Helicase ATP-binding domain. Residue 84-91 (AQSGTGKT) participates in ATP binding. A DEAD box motif is present at residues 189-192 (DEAD). One can recognise a Helicase C-terminal domain in the interval 252 to 413 (GIKQFYVNVD…ELPANVADLL (162 aa)).

The protein belongs to the DEAD box helicase family. eIF4A subfamily. In terms of assembly, eIF4F is a multi-subunit complex, the composition of which varies with external and internal environmental conditions. It is composed of at least EIF4A, EIF4E and EIF4G.

The enzyme catalyses ATP + H2O = ADP + phosphate + H(+). In terms of biological role, ATP-dependent RNA helicase which is a subunit of the eIF4F complex involved in cap recognition and is required for mRNA binding to ribosome. In the current model of translation initiation, eIF4A unwinds RNA secondary structures in the 5'-UTR of mRNAs which is necessary to allow efficient binding of the small ribosomal subunit, and subsequent scanning for the initiator codon. This chain is Eukaryotic initiation factor 4A-10, found in Nicotiana tabacum (Common tobacco).